A 120-amino-acid polypeptide reads, in one-letter code: Vanadium-binding protein 2 (120 aa).

An N-terminal signal peptide occupies residues 1-20; the sequence is MSKVIFALVLVVVLVACINA. The propeptide occupies 21 to 29; the sequence is TYVEFEEAY. Disulfide bonds link Cys-34-Cys-88, Cys-38-Cys-84, Cys-42-Cys-81, Cys-48-Cys-74, Cys-52-Cys-69, Cys-56-Cys-65, Cys-92-Cys-119, Cys-97-Cys-114, and Cys-101-Cys-111.

In terms of assembly, interacts with VIP1. In terms of tissue distribution, expressed in vanadocytes.

Its subcellular location is the cytoplasm. Its function is as follows. Acts as a vanadium reductase which may form an electron transfer cascade in conjunction with NADPH and glutathione through thiol disulfide exchange reactions. Partial cleavage of its disulfide bonds results in the reduction of V(5+) to V(4+). Binds up to 24 V(4+) ions per protein at pH 7.5. Also binds Fe(3+) and Cu(2+) and, to a lesser extent, Co(2+), Zn(2+) and Ni(2+). This chain is Vanadium-binding protein 2, found in Ascidia sydneiensis samea (Vanadium-rich ascidian).